A 557-amino-acid polypeptide reads, in one-letter code: Venom carboxylesterase-6 (557 aa).

An N-terminal signal peptide occupies residues 1–21; the sequence is MYMLKLSYILLFLGFVKFSWQ. Cysteines 88 and 108 form a disulfide. A glycan (N-linked (GlcNAc...) asparagine) is linked at asparagine 145. Catalysis depends on serine 212, which acts as the Acyl-ester intermediate. An intrachain disulfide couples cysteine 264 to cysteine 275. Residue glutamate 341 is the Charge relay system of the active site. N-linked (GlcNAc...) asparagine glycosylation is present at asparagine 374. The Charge relay system role is filled by histidine 464. Residues asparagine 478, asparagine 528, and asparagine 542 are each glycosylated (N-linked (GlcNAc...) asparagine).

The protein belongs to the type-B carboxylesterase/lipase family. In terms of tissue distribution, expressed by the venom gland.

The protein localises to the secreted. The enzyme catalyses a carboxylic ester + H2O = an alcohol + a carboxylate + H(+). This Apis mellifera (Honeybee) protein is Venom carboxylesterase-6.